Reading from the N-terminus, the 270-residue chain is tRNA pseudouridine synthase A (270 aa).

Aspartate 51 functions as the Nucleophile in the catalytic mechanism. Tyrosine 109 lines the substrate pocket.

This sequence belongs to the tRNA pseudouridine synthase TruA family. Homodimer.

The enzyme catalyses uridine(38/39/40) in tRNA = pseudouridine(38/39/40) in tRNA. Functionally, formation of pseudouridine at positions 38, 39 and 40 in the anticodon stem and loop of transfer RNAs. This Burkholderia thailandensis (strain ATCC 700388 / DSM 13276 / CCUG 48851 / CIP 106301 / E264) protein is tRNA pseudouridine synthase A.